The following is a 644-amino-acid chain: DNA mismatch repair protein MutL (644 aa).

Residues 336–400 are disordered; it reads ERPFEPSSPQ…EISRDSSLGE (65 aa). Over residues 373–400 the composition is skewed to basic and acidic residues; that stretch reads SKTHSTWDEASRVDTSRAEISRDSSLGE.

Belongs to the DNA mismatch repair MutL/HexB family.

This protein is involved in the repair of mismatches in DNA. It is required for dam-dependent methyl-directed DNA mismatch repair. May act as a 'molecular matchmaker', a protein that promotes the formation of a stable complex between two or more DNA-binding proteins in an ATP-dependent manner without itself being part of a final effector complex. The polypeptide is DNA mismatch repair protein MutL (Shewanella sp. (strain MR-7)).